The sequence spans 62 residues: MTFIFQLALFALVALSFLLVVGVPVAFAAPEGWNVTKGYVFQGVSAWFALVFTVGVLNSLVA.

2 helical membrane-spanning segments follow: residues 8 to 28 (ALFALVALSFLLVVGVPVAFA) and 41 to 61 (FQGVSAWFALVFTVGVLNSLV).

It belongs to the PsbZ family. In terms of assembly, PSII is composed of 1 copy each of membrane proteins PsbA, PsbB, PsbC, PsbD, PsbE, PsbF, PsbH, PsbI, PsbJ, PsbK, PsbL, PsbM, PsbT, PsbY, PsbZ, Psb30/Ycf12, at least 3 peripheral proteins of the oxygen-evolving complex and a large number of cofactors. It forms dimeric complexes.

It localises to the plastid. Its subcellular location is the chloroplast thylakoid membrane. Its function is as follows. May control the interaction of photosystem II (PSII) cores with the light-harvesting antenna, regulates electron flow through the 2 photosystem reaction centers. PSII is a light-driven water plastoquinone oxidoreductase, using light energy to abstract electrons from H(2)O, generating a proton gradient subsequently used for ATP formation. This Nephroselmis olivacea (Green alga) protein is Photosystem II reaction center protein Z.